The sequence spans 250 residues: tRNA (guanine-N(1)-)-methyltransferase (250 aa).

S-adenosyl-L-methionine-binding positions include G116 and 136–141; that span reads IGDYVL.

Belongs to the RNA methyltransferase TrmD family. As to quaternary structure, homodimer.

It localises to the cytoplasm. It catalyses the reaction guanosine(37) in tRNA + S-adenosyl-L-methionine = N(1)-methylguanosine(37) in tRNA + S-adenosyl-L-homocysteine + H(+). Specifically methylates guanosine-37 in various tRNAs. This chain is tRNA (guanine-N(1)-)-methyltransferase, found in Pseudomonas putida (strain W619).